The following is a 240-amino-acid chain: MATPHINAEMGDFADVVLMPGDPLRAKHIAETFLEDVREVNNVRGMLGFTGTYKGRKISVMGHGMGIPSCSIYTKELITDFGVKKIIRVGSCGAVRMDVKLRDVVIGMGACTDSKVNRMRFKDHDFAAIADFGMVRNAVDAAKALGVDARVGNIFSADLFYSPDGGEMFDVMEKYGILGVEMEAAGIYGVAAEFGAKALTICTVSDHIRTHEQTSAAERQTTFNDMIKIALESVLLGDKE.

Position 5 (His5) interacts with a purine D-ribonucleoside. Phosphate contacts are provided by residues Gly21, Arg25, Arg44, and 88 to 91 (RVGS). Residues 181–183 (EME) and 205–206 (SD) each bind a purine D-ribonucleoside. Asp206 acts as the Proton donor in catalysis.

The protein belongs to the PNP/UDP phosphorylase family. In terms of assembly, homohexamer; trimer of homodimers.

The enzyme catalyses a purine D-ribonucleoside + phosphate = a purine nucleobase + alpha-D-ribose 1-phosphate. It catalyses the reaction a purine 2'-deoxy-D-ribonucleoside + phosphate = a purine nucleobase + 2-deoxy-alpha-D-ribose 1-phosphate. In terms of biological role, catalyzes the reversible phosphorolytic breakdown of the N-glycosidic bond in the beta-(deoxy)ribonucleoside molecules, with the formation of the corresponding free purine bases and pentose-1-phosphate. This is Purine nucleoside phosphorylase DeoD-type from Enterobacter sp. (strain 638).